A 207-amino-acid polypeptide reads, in one-letter code: Cilia- and flagella-associated protein 418 (207 aa).

Positions methionine 1 to histidine 75 are required for interaction with FAM161A.

As to quaternary structure, interacts (via N-terminus) with FAM161A (via central region); the interaction is direct. Expressed in the retina (at protein level).

Its subcellular location is the cytoplasm. The protein resides in the photoreceptor inner segment. Functionally, may be involved in photoreceptor outer segment disk morphogenesis. The sequence is that of Cilia- and flagella-associated protein 418 (CFAP418) from Bos taurus (Bovine).